We begin with the raw amino-acid sequence, 89 residues long: Small ribosomal subunit protein uS17 (89 aa).

This sequence belongs to the universal ribosomal protein uS17 family. Part of the 30S ribosomal subunit.

Its function is as follows. One of the primary rRNA binding proteins, it binds specifically to the 5'-end of 16S ribosomal RNA. The sequence is that of Small ribosomal subunit protein uS17 from Nocardia farcinica (strain IFM 10152).